A 188-amino-acid chain; its full sequence is Ion-translocating oxidoreductase complex subunit B (188 aa).

A hydrophobic region spans residues 1-26 (MMSLWIAIGALSTLALVSGVVLGFAA). The 4Fe-4S domain maps to 32 to 91 (DEDPVVEQVDAILPQSQCGQCGYPGCRPYAEAVSTGGEKINKCAPGGEQVMLKLAELLAV). [4Fe-4S] cluster is bound by residues C49, C52, C57, C74, C117, C120, C123, C127, C147, C150, C153, and C157. 4Fe-4S ferredoxin-type domains lie at 108-137 (KVAFIDEANCIGCTKCIQACPVDAIIGATR) and 138-167 (AMHTVLSDLCTGCDLCVAPCPTDCIEMIPV).

The protein belongs to the 4Fe4S bacterial-type ferredoxin family. RnfB subfamily. In terms of assembly, the complex is composed of six subunits: RnfA, RnfB, RnfC, RnfD, RnfE and RnfG. It depends on [4Fe-4S] cluster as a cofactor.

It localises to the cell inner membrane. Its function is as follows. Part of a membrane-bound complex that couples electron transfer with translocation of ions across the membrane. The polypeptide is Ion-translocating oxidoreductase complex subunit B (Yersinia pestis bv. Antiqua (strain Antiqua)).